The chain runs to 215 residues: Heart- and neural crest derivatives-expressed protein 1 (215 aa).

Disordered regions lie at residues 53-109 (APDF…RTES) and 166-198 (LKKADGGRESKRKRELQQHEGFPPALGPVEKRI). A compositionally biased stretch (low complexity) spans 65 to 89 (AAAAATAYGPDARPGQSPGRLEALG). Basic residues predominate over residues 92–104 (LGRRKGSGPKKER). In terms of domain architecture, bHLH spans 94–146 (RRKGSGPKKERRRTESINSAFAELRECIPNVPADTKLSKIKTLRLATSYIAYL). Phosphothreonine; by PLK4 is present on T107. S109 is subject to Phosphoserine; by PLK4.

Efficient DNA binding requires dimerization with another bHLH protein. Forms homodimers and heterodimers with TCF3 gene products E12 and E47, HAND2 and HEY1, HEY2 and HEYL (hairy-related transcription factors). Interacts with MDFIC. Interacts with SOX15; the interaction enhances HAND1-induced differentiation of trophoblast giant cells. In terms of processing, phosphorylation by PLK4 disrupts the interaction with MDFIC and leads to translocation into the nucleoplasm, allowing dimerization and transcription factor activity. Heart.

It localises to the nucleus. Its subcellular location is the nucleoplasm. It is found in the nucleolus. In terms of biological role, transcription factor that plays an essential role in both trophoblast giant cell differentiation and in cardiac morphogenesis. Binds the DNA sequence 5'-NRTCTG-3' (non-canonical E-box). Acts as a transcriptional repressor of SOX15. In the adult, could be required for ongoing expression of cardiac-specific genes. In Homo sapiens (Human), this protein is Heart- and neural crest derivatives-expressed protein 1 (HAND1).